The chain runs to 159 residues: Small ribosomal subunit protein uS7 (159 aa).

Belongs to the universal ribosomal protein uS7 family. In terms of assembly, part of the 30S ribosomal subunit. Contacts proteins S9 and S11.

Functionally, one of the primary rRNA binding proteins, it binds directly to 16S rRNA where it nucleates assembly of the head domain of the 30S subunit. Is located at the subunit interface close to the decoding center, probably blocks exit of the E-site tRNA. The polypeptide is Small ribosomal subunit protein uS7 (Wolbachia pipientis wMel).